Reading from the N-terminus, the 174-residue chain is Interferon gamma (174 aa).

The signal sequence occupies residues 1-23; that stretch reads MHTTRCILALLLCLTQAMSGCYC. Glutamine 24 is modified (pyrrolidone carboxylic acid). Asparagine 39 and asparagine 106 each carry an N-linked (GlcNAc...) asparagine glycan.

The protein belongs to the type II (or gamma) interferon family. As to quaternary structure, homodimer. Interacts with IFNGR1 (via extracellular domain); this interaction promotes IFNGR1 dimerization. As to expression, released primarily from activated T lymphocytes.

The protein localises to the secreted. Type II interferon produced by immune cells such as T-cells and NK cells that plays crucial roles in antimicrobial, antiviral, and antitumor responses by activating effector immune cells and enhancing antigen presentation. Primarily signals through the JAK-STAT pathway after interaction with its receptor IFNGR1 to affect gene regulation. Upon IFNG binding, IFNGR1 intracellular domain opens out to allow association of downstream signaling components JAK2, JAK1 and STAT1, leading to STAT1 activation, nuclear translocation and transcription of IFNG-regulated genes. Many of the induced genes are transcription factors such as IRF1 that are able to further drive regulation of a next wave of transcription. Plays a role in class I antigen presentation pathway by inducing a replacement of catalytic proteasome subunits with immunoproteasome subunits. In turn, increases the quantity, quality, and repertoire of peptides for class I MHC loading. Increases the efficiency of peptide generation also by inducing the expression of activator PA28 that associates with the proteasome and alters its proteolytic cleavage preference. Up-regulates as well MHC II complexes on the cell surface by promoting expression of several key molecules such as cathepsins B/CTSB, H/CTSH, and L/CTSL. Participates in the regulation of hematopoietic stem cells during development and under homeostatic conditions by affecting their development, quiescence, and differentiation. The chain is Interferon gamma (IFNG) from Mesocricetus auratus (Golden hamster).